The chain runs to 411 residues: Phospholipase ABHD3 (411 aa).

Residues 25-45 form a helical; Signal-anchor for type II membrane protein membrane-spanning segment; that stretch reads VGFFGSGVGLSLILGFSVAYA. An AB hydrolase-1 domain is found at 140 to 233; it reads PTILLLPGLT…MLLLNYLGKI (94 aa). Active-site charge relay system residues include serine 220, aspartate 346, and histidine 375.

The protein belongs to the AB hydrolase superfamily. AB hydrolase 4 family. Widely expressed with higher expression in liver.

It is found in the membrane. The enzyme catalyses a 1,2-diacyl-sn-glycero-3-phosphocholine + H2O = a 1-acyl-sn-glycero-3-phosphocholine + a fatty acid + H(+). It catalyses the reaction a 1,2-diacyl-sn-glycero-3-phosphocholine + H2O = a 2-acyl-sn-glycero-3-phosphocholine + a fatty acid + H(+). It carries out the reaction 1-tetradecanoyl-2-(9Z,12Z-octadecadienoyl)-sn-glycero-3-phosphocholine + H2O = 2-(9Z,12Z-octadecadienoyl)-sn-glycero-3-phosphocholine + tetradecanoate + H(+). The catalysed reaction is 1-tetradecanoyl-2-(9Z,12Z-octadecadienoyl)-sn-glycero-3-phosphocholine + H2O = 1-tetradecanoyl-sn-glycero-3-phosphocholine + (9Z,12Z)-octadecadienoate + H(+). The enzyme catalyses 1-tetradecanoyl-2-(5Z,8Z,11Z,14Z-eicosatetraenoyl)-sn-glycero-3-phosphocholine + H2O = 2-(5Z,8Z,11Z,14Z)-eicosatetraenoyl-sn-glycero-3-phosphocholine + tetradecanoate + H(+). It catalyses the reaction 1-tetradecanoyl-2-(4Z,7Z,10Z,13Z,16Z,19Z-docosahexaenoyl)-sn-glycero-3-phosphocholine + H2O = 2-(4Z,7Z,10Z,13Z,16Z,19Z-docosahexaenoyl)-sn-glycero-3-phosphocholine + tetradecanoate + H(+). It carries out the reaction 1,2-ditetradecanoyl-sn-glycero-3-phosphocholine + H2O = 2-tetradecanoyl-sn-glycero-3-phosphocholine + tetradecanoate + H(+). The catalysed reaction is 1-octadecanoyl-2-acetyl-sn-glycero-3-phosphocholine + H2O = 1-octadecanoyl-sn-glycero-3-phosphocholine + acetate + H(+). The enzyme catalyses 1,2-ditetradecanoyl-sn-glycero-3-phosphocholine + H2O = 1-tetradecanoyl-sn-glycero-3-phosphocholine + tetradecanoate + H(+). It catalyses the reaction 1-octadecanoyl-2-pentanoyl-sn-glycero-3-phosphocholine + H2O = pentanoate + 1-octadecanoyl-sn-glycero-3-phosphocholine + H(+). It carries out the reaction 1-octadecanoyl-2-hexanoyl-sn-glycero-3-phosphocholine + H2O = hexanoate + 1-octadecanoyl-sn-glycero-3-phosphocholine + H(+). The catalysed reaction is 1-octadecanoyl-2-octanoyl-sn-glycero-3-phosphocholine + H2O = 1-octadecanoyl-sn-glycero-3-phosphocholine + octanoate + H(+). The enzyme catalyses 1-octadecanoyl-2-nonanoyl-sn-glycero-3-phosphocholine + H2O = nonanoate + 1-octadecanoyl-sn-glycero-3-phosphocholine + H(+). It catalyses the reaction 1-O-hexadecyl-2-nonadioyl-sn-glycero-3-phosphocholine + H2O = nonanedioate + 1-O-hexadecyl-sn-glycero-3-phosphocholine + H(+). It carries out the reaction 1-hexadecanoyl-2-nonadioyl-sn-glycero-3-phosphocholine + H2O = nonanedioate + 1-hexadecanoyl-sn-glycero-3-phosphocholine + H(+). The catalysed reaction is 1-hexadecanoyl-2-(9-oxononanoyl)-sn-glycero-3-phosphocholine + H2O = 9-oxononanoate + 1-hexadecanoyl-sn-glycero-3-phosphocholine + H(+). The enzyme catalyses 1-hexadecanoyl-2-(5-oxopentanoyl)-sn-glycero-3-phosphocholine + H2O = 5-oxopentanoate + 1-hexadecanoyl-sn-glycero-3-phosphocholine + H(+). It catalyses the reaction 1-hexadecanoyl-2-glutaroyl-sn-glycero-3-phosphocholine + H2O = glutarate + 1-hexadecanoyl-sn-glycero-3-phosphocholine + H(+). It carries out the reaction 1-O-hexadecyl-2-acetyl-sn-glycero-3-phosphocholine + H2O = 1-O-hexadecyl-sn-glycero-3-phosphocholine + acetate + H(+). Functionally, phospholipase that may play a role in phospholipids remodeling. May selectively cleave myristate (C14)-containing phosphatidylcholines through its predominant phospholipase 1 activity, cleaving preferentially acyl groups in sn1 position. In parallel, may have a minor phospholipase 2 activity acting on acyl groups in position sn2. In addition to (C14)-containing phosphatidylcholines, may also act on other medium-chain-containing and oxidatively truncated phospholipids. This Mus musculus (Mouse) protein is Phospholipase ABHD3.